Here is a 206-residue protein sequence, read N- to C-terminus: Delta and osm-11 homolog protein 1 (206 aa).

The polypeptide is Delta and osm-11 homolog protein 1 (dos-1) (Caenorhabditis elegans).